The sequence spans 765 residues: Dipeptidyl peptidase 4 (765 aa).

The Cytoplasmic segment spans residues 1–6; that stretch reads MKTPWK. Residues 7-29 traverse the membrane as a helical; Signal-anchor for type II membrane protein segment; it reads VLLGLLAIAALVTVITVPVVLLT. Residues 30-765 are Extracellular-facing; the sequence is KGNDASTDSR…HFLKQCFSLL (736 aa). 9 N-linked (GlcNAc...) asparagine glycosylation sites follow: asparagine 84, asparagine 91, asparagine 149, asparagine 218, asparagine 228, asparagine 271, asparagine 280, asparagine 320, and asparagine 392. Cystine bridges form between cysteine 384–cysteine 393, cysteine 443–cysteine 446, and cysteine 453–cysteine 471. Asparagine 495 carries an N-linked (GlcNAc...) asparagine glycan. Catalysis depends on serine 629, which acts as the Charge relay system. Cysteine 648 and cysteine 761 are joined by a disulfide. N-linked (GlcNAc...) asparagine glycosylation occurs at asparagine 684. Residues aspartate 707 and histidine 739 each act as charge relay system in the active site.

This sequence belongs to the peptidase S9B family. DPPIV subfamily. Monomer. Homodimer. Heterodimer with Seprase (FAP). Requires homodimerization for optimal dipeptidyl peptidase activity and T-cell costimulation. Found in a membrane raft complex, at least composed of BCL10, CARD11, DPP4 and IKBKB. Associates with collagen. Interacts with PTPRC; the interaction is enhanced in an interleukin-12-dependent manner in activated lymphocytes. Interacts (via extracellular domain) with ADA; does not inhibit its dipeptidyl peptidase activity. Interacts with CAV1 (via the N-terminus); the interaction is direct. Interacts (via cytoplasmic tail) with CARD11 (via PDZ domain); its homodimerization is necessary for interaction with CARD11. Interacts with IGF2R; the interaction is direct. Interacts with GPC3. In terms of processing, the soluble form (Dipeptidyl peptidase 4 soluble form also named SDPP) derives from the membrane form (Dipeptidyl peptidase 4 membrane form also named MDPP) by proteolytic processing. N- and O-Glycosylated. Post-translationally, phosphorylated. Mannose 6-phosphate residues in the carbohydrate moiety are necessary for interaction with IGF2R in activated T-cells. Mannose 6-phosphorylation is induced during T-cell activation. In terms of tissue distribution, intestinal epithelium, dendritic cells and several immune system tissues.

Its subcellular location is the secreted. It localises to the cell membrane. The protein resides in the apical cell membrane. It is found in the cell projection. The protein localises to the invadopodium membrane. Its subcellular location is the lamellipodium membrane. It localises to the cell junction. The protein resides in the membrane raft. The enzyme catalyses Release of an N-terminal dipeptide, Xaa-Yaa-|-Zaa-, from a polypeptide, preferentially when Yaa is Pro, provided Zaa is neither Pro nor hydroxyproline.. Inhibited by GPC3 and diprotin A. Its function is as follows. Cell surface glycoprotein receptor involved in the costimulatory signal essential for T-cell receptor (TCR)-mediated T-cell activation. Acts as a positive regulator of T-cell coactivation, by binding at least ADA, CAV1, IGF2R, and PTPRC. Its binding to CAV1 and CARD11 induces T-cell proliferation and NF-kappa-B activation in a T-cell receptor/CD3-dependent manner. Its interaction with ADA also regulates lymphocyte-epithelial cell adhesion. In association with FAP is involved in the pericellular proteolysis of the extracellular matrix (ECM), the migration and invasion of endothelial cells into the ECM. May be involved in the promotion of lymphatic endothelial cells adhesion, migration and tube formation. When overexpressed, enhanced cell proliferation, a process inhibited by GPC3. Also acts as a serine exopeptidase with a dipeptidyl peptidase activity that regulates various physiological processes by cleaving peptides in the circulation, including many chemokines, mitogenic growth factors, neuropeptides and peptide hormones. Removes N-terminal dipeptides sequentially from polypeptides having unsubstituted N-termini provided that the penultimate residue is proline. The chain is Dipeptidyl peptidase 4 (DPP4) from Bos taurus (Bovine).